The chain runs to 543 residues: Glutamyl-tRNA(Gln) amidotransferase subunit B-1, chloroplastic/mitochondrial (543 aa).

Residues Met-1 to Thr-47 are disordered. Over residues Arg-12 to Arg-23 the composition is skewed to basic residues.

The protein belongs to the GatB/GatE family. GatB subfamily. In terms of assembly, subunit of the heterotrimeric GatCAB amidotransferase (AdT) complex, composed of A, B and C subunits.

It is found in the mitochondrion. It localises to the plastid. The protein localises to the chloroplast. The catalysed reaction is L-glutamyl-tRNA(Gln) + L-glutamine + ATP + H2O = L-glutaminyl-tRNA(Gln) + L-glutamate + ADP + phosphate + H(+). In terms of biological role, allows the formation of correctly charged Gln-tRNA(Gln) through the transamidation of misacylated Glu-tRNA(Gln) in chloroplasts and mitochondria. The reaction takes place in the presence of glutamine and ATP through an activated gamma-phospho-Glu-tRNA(Gln). The polypeptide is Glutamyl-tRNA(Gln) amidotransferase subunit B-1, chloroplastic/mitochondrial (Micromonas commoda (strain RCC299 / NOUM17 / CCMP2709) (Picoplanktonic green alga)).